We begin with the raw amino-acid sequence, 498 residues long: Protein flp (498 aa).

The next 4 membrane-spanning stretches (helical) occupy residues 6–26 (LYFL…IYIT), 389–409 (FNIV…FSAY), 433–453 (LSLC…YLIL), and 471–491 (LALI…LLFL).

The protein resides in the cell membrane. Its function is as follows. Its precise function is unknown. Has no penicillin-binding activity and is not involved in methicillin resistance. This chain is Protein flp (flp), found in Staphylococcus aureus (strain COL).